Consider the following 119-residue polypeptide: uncharacterized protein (119 aa).

The N-terminal stretch at 1-18 is a signal peptide; the sequence is MPAVFMLASSSALQCGRG. Residues 23 to 100 are disordered; it reads PRTEVGAGHS…MFPGPLRGPA (78 aa). The span at 43-71 shows a compositional bias: polar residues; that stretch reads GNQTSVIPATSRQAALGTSWTQRRTQPLQ. Residue asparagine 44 is glycosylated (N-linked (GlcNAc...) asparagine).

The protein localises to the secreted. This is an uncharacterized protein from Homo sapiens (Human).